A 507-amino-acid polypeptide reads, in one-letter code: Glucose-6-phosphate isomerase (507 aa).

Catalysis depends on Glu337, which acts as the Proton donor. Residues His368 and Lys478 contribute to the active site.

The protein belongs to the GPI family.

It localises to the cytoplasm. It carries out the reaction alpha-D-glucose 6-phosphate = beta-D-fructose 6-phosphate. It participates in carbohydrate biosynthesis; gluconeogenesis. The protein operates within carbohydrate degradation; glycolysis; D-glyceraldehyde 3-phosphate and glycerone phosphate from D-glucose: step 2/4. Functionally, catalyzes the reversible isomerization of glucose-6-phosphate to fructose-6-phosphate. The sequence is that of Glucose-6-phosphate isomerase from Novosphingobium aromaticivorans (strain ATCC 700278 / DSM 12444 / CCUG 56034 / CIP 105152 / NBRC 16084 / F199).